A 769-amino-acid polypeptide reads, in one-letter code: 5-methyltetrahydropteroyltriglutamate--homocysteine methyltransferase (769 aa).

Residues 17–20 (RELK) and Lys-118 each bind 5-methyltetrahydropteroyltri-L-glutamate. Residues 441-443 (IGS) and Glu-494 contribute to the L-homocysteine site. L-methionine contacts are provided by residues 441-443 (IGS) and Glu-494. 5-methyltetrahydropteroyltri-L-glutamate is bound by residues 525 to 526 (RC) and Trp-571. Asp-609 is an L-homocysteine binding site. Residue Asp-609 participates in L-methionine binding. Residue Glu-615 participates in 5-methyltetrahydropteroyltri-L-glutamate binding. Zn(2+)-binding residues include His-651, Cys-653, and Glu-675. Residue His-705 is the Proton donor of the active site. Cys-737 is a binding site for Zn(2+).

The protein belongs to the vitamin-B12 independent methionine synthase family. Zn(2+) serves as cofactor.

The enzyme catalyses 5-methyltetrahydropteroyltri-L-glutamate + L-homocysteine = tetrahydropteroyltri-L-glutamate + L-methionine. The protein operates within amino-acid biosynthesis; L-methionine biosynthesis via de novo pathway; L-methionine from L-homocysteine (MetE route): step 1/1. Its function is as follows. Catalyzes the transfer of a methyl group from 5-methyltetrahydrofolate to homocysteine resulting in methionine formation. The chain is 5-methyltetrahydropteroyltriglutamate--homocysteine methyltransferase from Blochmanniella floridana.